The sequence spans 221 residues: HP1-HOAP-interacting protein (221 aa).

The disordered stretch occupies residues 69–113 (NAKRHKMARETAASITDVSGSQSSSHQSAPSLHVSGQSSEFGASY). Over residues 86 to 103 (VSGSQSSSHQSAPSLHVS) the composition is skewed to low complexity.

Component of the HipHop-HOAP telomere-capping complex, composed of at least HipHop and cav/HOAP, and may include Su(var)205/HP1; HipHop and cav/HOAP, but not Su(var)205, are interdependent for their protein stability. Interacts (via N-terminus) with cav/HOAP and Su(var)205/HP1. The HipHop-HOAP complex recruits the MTV complex, consisting of moi/modigliani, tea and ver/verrocchio, to telomeres to form the terminin telomere-capping complex.

The protein localises to the nucleus. The protein resides in the chromosome. It is found in the telomere. Functionally, part of the HipHop-HOAP complex that recruits the MTV complex to form the terminin telomere-capping complex, which binds to chromosome ends in a sequence-independent manner and prevents telomere fusion. The sequence is that of HP1-HOAP-interacting protein from Drosophila melanogaster (Fruit fly).